The chain runs to 465 residues: uncharacterized protein (465 aa).

The chain crosses the membrane as a helical span at residues 56 to 76 (ILYMIIFAIFGLLPFLIALIF). The segment at 177–198 (KFNKSKKSNKINDKTPILNNNN) is disordered. Residues 273-293 (LIFLLVSTILLIALIGFILII) form a helical membrane-spanning segment. Residues 411–449 (NNYNNSNNNNNSNNSNSNNNNNNNNNNNNYNNNNYNNNN) are disordered.

The protein resides in the membrane. This is an uncharacterized protein from Dictyostelium discoideum (Social amoeba).